The chain runs to 117 residues: Ig heavy chain V region 3 (117 aa).

A signal peptide spans 1–19; the sequence is MGWSCIILFLVATATGVHS. Residues 20 to 49 are framework-1; that stretch reads QVQLQQPGAELVRPGSSVKLSCKASGYTFT. Residues cysteine 41 and cysteine 115 are joined by a disulfide bond. The interval 50 to 54 is complementarity-determining-1; the sequence is SYWMD. Positions 55–68 are framework-2; that stretch reads WVKQRPGQGLEWIG. A complementarity-determining-2 region spans residues 69 to 85; sequence NIYPSDSETHYNQKFKD. Positions 86–117 are framework-3; the sequence is KATLTVDKSSSTAYMQLSSLTSEDSAVYYCAR.

The polypeptide is Ig heavy chain V region 3 (Ighv1-61) (Mus musculus (Mouse)).